The following is a 99-amino-acid chain: NADH-quinone oxidoreductase subunit K (99 aa).

3 helical membrane-spanning segments follow: residues 3 to 23 (VTAY…GVLI), 28 to 48 (IVVF…LVAF), and 59 to 79 (IAAF…LAII).

It belongs to the complex I subunit 4L family. In terms of assembly, NDH-1 is composed of 14 different subunits. Subunits NuoA, H, J, K, L, M, N constitute the membrane sector of the complex.

Its subcellular location is the cell membrane. The enzyme catalyses a quinone + NADH + 5 H(+)(in) = a quinol + NAD(+) + 4 H(+)(out). Functionally, NDH-1 shuttles electrons from NADH, via FMN and iron-sulfur (Fe-S) centers, to quinones in the respiratory chain. The immediate electron acceptor for the enzyme in this species is believed to be a menaquinone. Couples the redox reaction to proton translocation (for every two electrons transferred, four hydrogen ions are translocated across the cytoplasmic membrane), and thus conserves the redox energy in a proton gradient. In Nocardioides sp. (strain ATCC BAA-499 / JS614), this protein is NADH-quinone oxidoreductase subunit K.